Reading from the N-terminus, the 775-residue chain is Transposon TX1 uncharacterized 82 kDa protein (775 aa).

The segment covering 1 to 10 (MGGNKKESYK) has biased composition (basic and acidic residues). Disordered regions lie at residues 1-46 (MGGN…ASTS), 256-277 (PKGQ…KTSY), and 535-565 (PIQD…TSTV). Residues 35–46 (EPMSKSPIASTS) show a composition bias toward polar residues. Residues 539-549 (PADKTAGKDGE) are compositionally biased toward basic and acidic residues.

The protein is Transposon TX1 uncharacterized 82 kDa protein of Xenopus laevis (African clawed frog).